The sequence spans 800 residues: Nuclear cap-binding protein subunit 1 (800 aa).

Residues 1-26 (MSRRRAHDTEDEGYDHRRNKRRRVSE) are disordered. At Thr-9 the chain carries Phosphothreonine. The MIF4G domain maps to 31 to 243 (EDRLESLILR…CLWAQIRKLR (213 aa)). The tract at residues 669–700 (LAKADSSSSDSEDDSSHKRKKPITHADKPSEE) is disordered.

It belongs to the NCBP1 family. Component of the nuclear cap-binding complex (CBC), a heterodimer composed of Cbp80 and Cbp20 that interacts with m7GpppG-capped RNA.

The protein localises to the nucleus. Functionally, component of the cap-binding complex (CBC), which binds cotranscriptionally to the 5'-cap of pre-mRNAs and is involved in various processes such as pre-mRNA splicing and RNA-mediated gene silencing (RNAi). The CBC complex is involved in miRNA-mediated RNA interference via its interaction with Ars2 and is required for primary microRNAs (miRNAs) processing. Also involved in innate immunity via the short interfering RNAs (siRNAs) processing machinery by restricting the viral RNA production. In the CBC complex, Cbp80 does not bind directly capped RNAs (m7GpppG-capped RNA) but is required to stabilize the movement of the N-terminal loop of Cbp20 and lock the CBC into a high affinity cap-binding state with the cap structure. The protein is Nuclear cap-binding protein subunit 1 (Cbp80) of Drosophila melanogaster (Fruit fly).